The following is a 463-amino-acid chain: MAVTPSLLRLALLLLGAVGRAGPRPQGATVSLSETVQKWREYRHQCQRFLTEAPLLATGLFCNRTFDDYACWPDGPPGSFVNVSCPWYLPWASSVLQGHVYRFCTAEGIWLHKDNSSLPWRDLSECEESKQGERNSPEEQLLSLYIIYTVGYALSFSALVIASAILVSFRHLHCTRNYIHLNLFASFILRALSVFIKDAALKWMYSTAAQQHQWDGLLSYQDSLGCRLVFLLMQYCVAANYYWLLVEGVYLYTLLAFSVFSEQRIFKLYLSIGWGVPLLFVIPWGIVKYLYEDEGCWTRNSNMNYWLIIRLPILFAIGVNFLVFIRVICIVIAKLKANLMCKTDIKCRLAKSTLTLIPLLGTHEVIFAFVMDEHARGTLRFVKLFTELSFTSFQGFMVAVLYCFVNNEVQMEFRKSWERWRLERLNIQRDSSMKPLKCPTSSVSSGATVGSSVYAATCQNSCS.

An N-terminal signal peptide occupies residues 1-21; sequence MAVTPSLLRLALLLLGAVGRA. Over 22 to 139 the chain is Extracellular; the sequence is GPRPQGATVS…KQGERNSPEE (118 aa). Intrachain disulfides connect cysteine 46–cysteine 71, cysteine 62–cysteine 104, and cysteine 85–cysteine 126. Asparagine 63, asparagine 82, and asparagine 115 each carry an N-linked (GlcNAc...) asparagine glycan. A helical membrane pass occupies residues 140–164; it reads QLLSLYIIYTVGYALSFSALVIASA. Residues 165–175 lie on the Cytoplasmic side of the membrane; it reads ILVSFRHLHCT. Residues 176-201 traverse the membrane as a helical segment; that stretch reads RNYIHLNLFASFILRALSVFIKDAAL. The Extracellular portion of the chain corresponds to 202–227; it reads KWMYSTAAQQHQWDGLLSYQDSLGCR. Cysteine 226 and cysteine 296 are oxidised to a cystine. Residues 228 to 251 form a helical membrane-spanning segment; it reads LVFLLMQYCVAANYYWLLVEGVYL. Residues 252–265 are Cytoplasmic-facing; that stretch reads YTLLAFSVFSEQRI. Residues 266-290 form a helical membrane-spanning segment; the sequence is FKLYLSIGWGVPLLFVIPWGIVKYL. The Extracellular segment spans residues 291 to 305; sequence YEDEGCWTRNSNMNY. The chain crosses the membrane as a helical span at residues 306–328; sequence WLIIRLPILFAIGVNFLVFIRVI. The Cytoplasmic portion of the chain corresponds to 329-348; the sequence is CIVIAKLKANLMCKTDIKCR. Cysteine 341 is subject to ADP-ribosylcysteine. The residue at position 348 (arginine 348) is an ADP-ribosylarginine. Residues 349–370 form a helical membrane-spanning segment; that stretch reads LAKSTLTLIPLLGTHEVIFAFV. The important for allosteric inhibitor binding stretch occupies residues 352–355; it reads STLT. The Extracellular portion of the chain corresponds to 371 to 383; it reads MDEHARGTLRFVK. The helical transmembrane segment at 384 to 404 threads the bilayer; that stretch reads LFTELSFTSFQGFMVAVLYCF. Topologically, residues 405–463 are cytoplasmic; sequence VNNEVQMEFRKSWERWRLERLNIQRDSSMKPLKCPTSSVSSGATVGSSVYAATCQNSCS.

This sequence belongs to the G-protein coupled receptor 2 family. As to quaternary structure, may form homodimers and heterodimers with GIPR. In terms of processing, N-glycosylation enhances cell surface expression and lengthens receptor half-life by preventing degradation in the ER. Pancreatic islets, stomach, lung, rat insulinoma cell line.

It localises to the cell membrane. Functionally, G-protein coupled receptor for glucagon-like peptide 1 (GLP-1). Ligand binding triggers activation of a signaling cascade that leads to the activation of adenylyl cyclase and increased intracellular cAMP levels. Plays a role in regulating insulin secretion in response to GLP-1. The chain is Glucagon-like peptide 1 receptor (Glp1r) from Rattus norvegicus (Rat).